We begin with the raw amino-acid sequence, 600 residues long: Spastin (600 aa).

The tract at residues 1-39 (MNSPGGRNDKKKPVTPAAETGPGSPTTPPSTETQVVLAP) is disordered. The Cytoplasmic portion of the chain corresponds to 1–53 (MNSPGGRNDKKKPVTPAAETGPGSPTTPPSTETQVVLAPPSPHKRNLHLFSYP). The span at 15-33 (TPAAETGPGSPTTPPSTET) shows a compositional bias: low complexity. Positions 54–74 (LLAVFSLLRFLAFQLGLLFVW) form an intramembrane region, helical. Residues 75-600 (CCELLSRSVM…WNQDFGDTTV (526 aa)) lie on the Cytoplasmic side of the membrane. The MIT domain maps to 110–185 (YHQQAFQYIS…IMAKDRLQLL (76 aa)). The disordered stretch occupies residues 213 to 294 (GLLKPEKGAV…KPATPTTAVR (82 aa)). Basic and acidic residues predominate over residues 216–228 (KPEKGAVPKKKDP). Over residues 253-291 (PNCTSVPTSARQAGAHTPSNRGATGKNNTRTNKPATPTT) the composition is skewed to polar residues. Residue 366-373 (GPPGNGKT) coordinates ATP.

The protein belongs to the AAA ATPase family. Spastin subfamily. Homohexamer. The homohexamer is stabilized by ATP-binding. The homohexamer may adopt a ring conformation through which microtubules pass prior to being severed. Interacts with microtubules.

The protein localises to the membrane. The protein resides in the cytoplasm. It localises to the cytoskeleton. Its subcellular location is the microtubule organizing center. It is found in the centrosome. The protein localises to the perinuclear region. The protein resides in the nucleus. The catalysed reaction is n ATP + n H2O + a microtubule = n ADP + n phosphate + (n+1) alpha/beta tubulin heterodimers.. ATP-dependent microtubule severing protein that specifically recognizes and cuts microtubules that are polyglutamylated. Preferentially recognizes and acts on microtubules decorated with short polyglutamate tails: severing activity increases as the number of glutamates per tubulin rises from one to eight, but decreases beyond this glutamylation threshold. Microtubule severing promotes reorganization of cellular microtubule arrays and the release of microtubules from the centrosome following nucleation. Required for membrane traffic from the endoplasmic reticulum (ER) to the Golgi and for completion of the abscission stage of cytokinesis. Also plays a role in axon growth and the formation of axonal branches. This is Spastin from Xenopus laevis (African clawed frog).